A 292-amino-acid chain; its full sequence is tRNA pseudouridine synthase B (292 aa).

D38 (nucleophile) is an active-site residue.

Belongs to the pseudouridine synthase TruB family. Type 1 subfamily.

It carries out the reaction uridine(55) in tRNA = pseudouridine(55) in tRNA. In terms of biological role, responsible for synthesis of pseudouridine from uracil-55 in the psi GC loop of transfer RNAs. The protein is tRNA pseudouridine synthase B of Streptococcus pneumoniae serotype 2 (strain D39 / NCTC 7466).